Here is a 294-residue protein sequence, read N- to C-terminus: Probable 2-(5''-triphosphoribosyl)-3'-dephosphocoenzyme-A synthase (294 aa).

Belongs to the CitG/MdcB family.

It carries out the reaction 3'-dephospho-CoA + ATP = 2'-(5''-triphospho-alpha-D-ribosyl)-3'-dephospho-CoA + adenine. This Streptococcus pyogenes serotype M5 (strain Manfredo) protein is Probable 2-(5''-triphosphoribosyl)-3'-dephosphocoenzyme-A synthase.